The following is a 224-amino-acid chain: MQLLKQLFKKKFVKEEHDKKTGQEGMTLLEVIIVLGIMGVVSAGVVTLAQRAIDSQIMTKAAQSLNSIQVALTQTYRGLGNYPATADATAASKLTSGLVSLGKISSDEAKNPFNGTNMNIFSFPRNAAANKAFAISVDGLTQAQCKTLITSVGDMFPYIAIKAGGAVALADLGDFENSAAAAETGVGVIKSIAPASKNLDLTNITHVEKLCKGTAPFGVAFGNS.

A propeptide spans 1–25 (MQLLKQLFKKKFVKEEHDKKTGQEG) (atypical leader sequence). N-methylmethionine is present on Met26. A helical membrane pass occupies residues 26 to 46 (MTLLEVIIVLGIMGVVSAGVV). A disulfide bridge links Cys145 with Cys211.

The protein resides in the fimbrium. It is found in the membrane. Its function is as follows. Major component of the toxin co-regulated pilus (tcp) which is a type IV pilus essential for bacterial aggregation and subsequent colonization in the host small intestine. The protein is Toxin coregulated pilin (tcpA) of Vibrio cholerae.